Consider the following 328-residue polypeptide: Ribosomal RNA large subunit methyltransferase F (328 aa).

The interval 1-31 (MTDTRKPPRKKPQRPAKPAAPREKATLHPRN) is disordered.

Belongs to the methyltransferase superfamily. METTL16/RlmF family.

It localises to the cytoplasm. It carries out the reaction adenosine(1618) in 23S rRNA + S-adenosyl-L-methionine = N(6)-methyladenosine(1618) in 23S rRNA + S-adenosyl-L-homocysteine + H(+). Specifically methylates the adenine in position 1618 of 23S rRNA. This chain is Ribosomal RNA large subunit methyltransferase F, found in Pseudomonas syringae pv. syringae (strain B728a).